The chain runs to 147 residues: DNA polymerase III subunit chi (147 aa).

Belongs to the DNA polymerase III chi/HolC chain family. In terms of assembly, the DNA polymerase III holoenzyme complex contains at least 10 different subunits organized into 3 functionally essential subassemblies: the Pol III core, the beta sliding clamp processivity factor and the clamp-loading complex. The Pol III core (subunits alpha, epsilon and theta) contains the polymerase and the 3'-5' exonuclease proofreading activities. The polymerase is tethered to the template via the dimeric beta sliding clamp processivity factor. The clamp-loading complex (also called gamma complex) assembles the beta sliding clamp onto the primed template and plays a central role in the organization and communication at the replication fork. The clamp-loading complex contains delta, delta', psi and chi, and 3 copies of either or both of two different DnaX proteins, gamma and tau. The DNA replisome complex has a single clamp loader (3 tau and 1 each of delta, delta', psi and chi subunits) which binds 3 Pol III cores (1 core on the leading strand and 2 on the lagging strand) each with a beta sliding clamp dimer. Additional proteins in the replisome are other copies of gamma, psi (holD) and chi (this protein), SSB, DNA helicase and RNA primase. The clamp loader hydrolyzes ATP to assemble the beta processivity factor onto the primed template and plays a central role in the organization and communication at the replication fork. The only subunit of the DNA polymerase III holoenzyme known to interact with single-stranded DNA binding protein (SSB). Interacts directly with the psi subunit (holD). Interacts directly with DNA helicase YoaA. It binds to HolD and YoaA, but not both simultaneously.

It carries out the reaction DNA(n) + a 2'-deoxyribonucleoside 5'-triphosphate = DNA(n+1) + diphosphate. In terms of biological role, part of the beta sliding clamp loading complex, which hydrolyzes ATP to load the beta clamp onto primed DNA to form the DNA replication pre-initiation complex. DNA polymerase III is a complex, multichain enzyme responsible for most of the replicative synthesis in bacteria. This DNA polymerase also exhibits 3' to 5' exonuclease activity. Genetically identified as involved in the repair of replication forks and tolerance of the chain-terminating nucleoside analog 3' AZT. This subunit may stabilize YoaA and/or stimulate the helicase activity of YoaA. This chain is DNA polymerase III subunit chi, found in Escherichia coli (strain K12).